The chain runs to 105 residues: Vacuolar ATPase assembly integral membrane protein VMA21 homolog (105 aa).

The interval 1-26 (MSTKNKKAAGGNGGAPKQTRQQSHDS) is disordered. Residues 1–36 (MSTKNKKAAGGNGGAPKQTRQQSHDSQDYSSFKTVL) are Cytoplasmic-facing. Residues 37 to 57 (FYCMLIVFLPVLTFFVLKGFV) form a helical membrane-spanning segment. Over 58–68 (LDQFLDISEVK) the chain is Lumenal. Residues 69–89 (VNIASAVGAVVALHIALGLYI) form a helical membrane-spanning segment. Residues 90–105 (YRAYFGTTGSKASKTD) lie on the Cytoplasmic side of the membrane.

The protein belongs to the VMA21 family.

It is found in the endoplasmic reticulum membrane. It localises to the endoplasmic reticulum-Golgi intermediate compartment membrane. Its subcellular location is the cytoplasmic vesicle. The protein resides in the COPII-coated vesicle membrane. Required for the assembly of the V0 complex of the vacuolar ATPase (V-ATPase) in the endoplasmic reticulum. This chain is Vacuolar ATPase assembly integral membrane protein VMA21 homolog, found in Drosophila erecta (Fruit fly).